We begin with the raw amino-acid sequence, 161 residues long: Allophycocyanin alpha chain 1 (161 aa).

Asn-71 is modified (N4-methylasparagine). (2R,3E)-phycocyanobilin is bound at residue Cys-81.

It belongs to the phycobiliprotein family. Component of the phycobilisome. Heterodimer of an alpha and a beta chain. Contains one covalently linked bilin chromophore.

The protein localises to the cellular thylakoid membrane. In terms of biological role, light-harvesting photosynthetic bile pigment-protein from the phycobiliprotein complex. Allophycocyanin has a maximum absorption at approximately 650 nanometers. The sequence is that of Allophycocyanin alpha chain 1 from Microchaete diplosiphon (Fremyella diplosiphon).